Reading from the N-terminus, the 290-residue chain is Ribosomal RNA small subunit methyltransferase A (290 aa).

S-adenosyl-L-methionine is bound by residues Asn27, Leu29, Gly54, Glu75, Asp100, and Asn125.

It belongs to the class I-like SAM-binding methyltransferase superfamily. rRNA adenine N(6)-methyltransferase family. RsmA subfamily.

The protein resides in the cytoplasm. The enzyme catalyses adenosine(1518)/adenosine(1519) in 16S rRNA + 4 S-adenosyl-L-methionine = N(6)-dimethyladenosine(1518)/N(6)-dimethyladenosine(1519) in 16S rRNA + 4 S-adenosyl-L-homocysteine + 4 H(+). Its function is as follows. Specifically dimethylates two adjacent adenosines (A1518 and A1519) in the loop of a conserved hairpin near the 3'-end of 16S rRNA in the 30S particle. May play a critical role in biogenesis of 30S subunits. This chain is Ribosomal RNA small subunit methyltransferase A, found in Streptococcus gordonii (strain Challis / ATCC 35105 / BCRC 15272 / CH1 / DL1 / V288).